The chain runs to 506 residues: ATP synthase subunit alpha (506 aa).

Residues Gly-119–Ile-129 are compositionally biased toward basic and acidic residues. The disordered stretch occupies residues Gly-119–Arg-138. An ATP-binding site is contributed by Gly-169–Thr-176.

The protein belongs to the ATPase alpha/beta chains family. As to quaternary structure, F-type ATPases have 2 components, CF(1) - the catalytic core - and CF(0) - the membrane proton channel. CF(1) has five subunits: alpha(3), beta(3), gamma(1), delta(1), epsilon(1). CF(0) has three main subunits: a(1), b(2) and c(9-12). The alpha and beta chains form an alternating ring which encloses part of the gamma chain. CF(1) is attached to CF(0) by a central stalk formed by the gamma and epsilon chains, while a peripheral stalk is formed by the delta and b chains.

It is found in the cell membrane. The catalysed reaction is ATP + H2O + 4 H(+)(in) = ADP + phosphate + 5 H(+)(out). In terms of biological role, produces ATP from ADP in the presence of a proton gradient across the membrane. The alpha chain is a regulatory subunit. The protein is ATP synthase subunit alpha of Caldanaerobacter subterraneus subsp. tengcongensis (strain DSM 15242 / JCM 11007 / NBRC 100824 / MB4) (Thermoanaerobacter tengcongensis).